The chain runs to 605 residues: Glutamine--fructose-6-phosphate aminotransferase [isomerizing] (605 aa).

Cysteine 2 functions as the Nucleophile; for GATase activity in the catalytic mechanism. The Glutamine amidotransferase type-2 domain occupies 2–216 (CGIVGIVGHQ…DGDWAVIGKT (215 aa)). 2 SIS domains span residues 280–420 (DSDA…ARGT) and 454–595 (LSRE…VDQP). Lysine 600 acts as the For Fru-6P isomerization activity in catalysis.

It localises to the cytoplasm. It catalyses the reaction D-fructose 6-phosphate + L-glutamine = D-glucosamine 6-phosphate + L-glutamate. Its function is as follows. Involved in the production of the root hair deformation (HAD) factor specifically on medicago. In Rhizobium meliloti (Ensifer meliloti), this protein is Glutamine--fructose-6-phosphate aminotransferase [isomerizing] (nodM).